A 175-amino-acid polypeptide reads, in one-letter code: ATP synthase subunit b, chloroplastic (175 aa).

A helical transmembrane segment spans residues 21–40; it reads LLESNVINIIILISLLIYLG.

It belongs to the ATPase B chain family. In terms of assembly, F-type ATPases have 2 components, F(1) - the catalytic core - and F(0) - the membrane proton channel. F(1) has five subunits: alpha(3), beta(3), gamma(1), delta(1), epsilon(1). F(0) has four main subunits: a(1), b(1), b'(1) and c(10-14). The alpha and beta chains form an alternating ring which encloses part of the gamma chain. F(1) is attached to F(0) by a central stalk formed by the gamma and epsilon chains, while a peripheral stalk is formed by the delta, b and b' chains.

The protein localises to the plastid. It is found in the chloroplast thylakoid membrane. Its function is as follows. F(1)F(0) ATP synthase produces ATP from ADP in the presence of a proton or sodium gradient. F-type ATPases consist of two structural domains, F(1) containing the extramembraneous catalytic core and F(0) containing the membrane proton channel, linked together by a central stalk and a peripheral stalk. During catalysis, ATP synthesis in the catalytic domain of F(1) is coupled via a rotary mechanism of the central stalk subunits to proton translocation. Component of the F(0) channel, it forms part of the peripheral stalk, linking F(1) to F(0). This chain is ATP synthase subunit b, chloroplastic, found in Cyanidium caldarium (Red alga).